Here is a 71-residue protein sequence, read N- to C-terminus: Prophage lysis protein S homolog EssQ (71 aa).

The protein belongs to the lambda phage S protein family.

The sequence is that of Prophage lysis protein S homolog EssQ (essQ) from Escherichia coli (strain K12).